Here is a 67-residue protein sequence, read N- to C-terminus: MPDFSNSNLNSFIACLRSLSIKILIICHGFIVFSSLAEVPSRLTNFFSIMILLTFSNFSRTLGLEFI.

Helical transmembrane passes span 13-32 (IACLRSLSIKILIICHGFIV) and 42-64 (RLTNFFSIMILLTFSNFSRTLGL).

Its subcellular location is the membrane. This is an uncharacterized protein from Saccharomyces cerevisiae (strain ATCC 204508 / S288c) (Baker's yeast).